A 231-amino-acid polypeptide reads, in one-letter code: Ribose-5-phosphate isomerase A (231 aa).

Residues 40 to 43, 93 to 96, and 106 to 109 each bind substrate; these read TGST, DGAD, and KGGG. Glu115 acts as the Proton acceptor in catalysis. Lys133 is a binding site for substrate.

It belongs to the ribose 5-phosphate isomerase family. Homodimer.

It catalyses the reaction aldehydo-D-ribose 5-phosphate = D-ribulose 5-phosphate. The protein operates within carbohydrate degradation; pentose phosphate pathway; D-ribose 5-phosphate from D-ribulose 5-phosphate (non-oxidative stage): step 1/1. Functionally, catalyzes the reversible conversion of ribose-5-phosphate to ribulose 5-phosphate. The sequence is that of Ribose-5-phosphate isomerase A from Escherichia coli O6:K15:H31 (strain 536 / UPEC).